The sequence spans 343 residues: MTSFLRSDRSRPVALWLFVVAVLVFAMVVVGGATRLTDSGLSITQWKPIMGALPPMSDEAWRANFELYKKIPQYRLVNAGMTLEAYKGIFWWEWAHRLLGRLVGVVFAIPFVFFLIRRMIPRRLIWRCAVLLGLGGLQGVVGWWMVSSGLSERVSVAPERLMTHLGLALALFVFVIWTALDAWAGSPRVEERTNWRGWALAFLGAVFFQSLLGALVAGNDAGLVYNDWPLMNGALVPAEYAGHGFWGTLAHSQGAVQLHHRLMAYALFVAAIVAGVAAARSRRLPEEAKLTAFVLVGVVCLQAGLGIWTLMTAVPLALGVLHQAGAAILLATATTFAWRVRRP.

8 helical membrane-spanning segments follow: residues Val13 to Ala33, His96 to Ile116, Val130 to Leu150, Leu165 to Gly185, Gly197 to Ala217, Leu258 to Ala278, Leu290 to Leu310, and Met311 to Ala331. His260 is a heme binding site. His322 is a binding site for heme.

The protein belongs to the COX15/CtaA family. Type 2 subfamily. Interacts with CtaB. Heme b serves as cofactor.

It is found in the cell membrane. It catalyses the reaction Fe(II)-heme o + 2 A + H2O = Fe(II)-heme a + 2 AH2. It functions in the pathway porphyrin-containing compound metabolism; heme A biosynthesis; heme A from heme O: step 1/1. Catalyzes the conversion of heme O to heme A by two successive hydroxylations of the methyl group at C8. The first hydroxylation forms heme I, the second hydroxylation results in an unstable dihydroxymethyl group, which spontaneously dehydrates, resulting in the formyl group of heme A. The polypeptide is Heme A synthase (Caulobacter sp. (strain K31)).